The chain runs to 395 residues: Elongation factor Tu (395 aa).

The region spanning K6 to T205 is the tr-type G domain. Residues G15–T22 are G1. Position 15-22 (G15–T22) interacts with GTP. Residue T22 participates in Mg(2+) binding. The interval G59 to S63 is G2. Positions D80 to G83 are G3. GTP contacts are provided by residues D80–H84 and N135–D138. The interval N135–D138 is G4. Residues S173–V175 are G5.

This sequence belongs to the TRAFAC class translation factor GTPase superfamily. Classic translation factor GTPase family. EF-Tu/EF-1A subfamily. As to quaternary structure, monomer.

The protein localises to the cytoplasm. The catalysed reaction is GTP + H2O = GDP + phosphate + H(+). In terms of biological role, GTP hydrolase that promotes the GTP-dependent binding of aminoacyl-tRNA to the A-site of ribosomes during protein biosynthesis. This is Elongation factor Tu from Ehrlichia chaffeensis (strain ATCC CRL-10679 / Arkansas).